The primary structure comprises 75 residues: UPF0235 protein MSMEG_3845 (75 aa).

This sequence belongs to the UPF0235 family.

In Mycolicibacterium smegmatis (strain ATCC 700084 / mc(2)155) (Mycobacterium smegmatis), this protein is UPF0235 protein MSMEG_3845.